An 892-amino-acid polypeptide reads, in one-letter code: Translation initiation factor IF-2 (892 aa).

Residues 51-296 (REHGSAPNKL…KGKRKPSTLQ (246 aa)) are disordered. Residues 68–82 (STLNIPSTGGKSKSV) are compositionally biased toward polar residues. The span at 99–217 (EQAKAEEQAQ…KMAAENEGKW (119 aa)) shows a compositional bias: basic and acidic residues. The span at 224–237 (QTESADYHVTTSQH) shows a compositional bias: polar residues. Residues 239–254 (RAAEDENDAKVEGDRR) show a composition bias toward basic and acidic residues. Residues 255-269 (SRTRGGKATKQKKGN) show a composition bias toward basic residues. Basic and acidic residues predominate over residues 270–283 (KLSESKADREEARA). The tr-type G domain occupies 391-560 (HRAPVVTIMG…LLQAEVMELK (170 aa)). Residues 400 to 407 (GHVDHGKT) form a G1 region. Position 400–407 (400–407 (GHVDHGKT)) interacts with GTP. A G2 region spans residues 425 to 429 (GITQH). A G3 region spans residues 446-449 (DTPG). Residues 446 to 450 (DTPGH) and 500 to 503 (NKID) contribute to the GTP site. The G4 stretch occupies residues 500–503 (NKID). Residues 536–538 (SAK) form a G5 region.

This sequence belongs to the TRAFAC class translation factor GTPase superfamily. Classic translation factor GTPase family. IF-2 subfamily.

It localises to the cytoplasm. One of the essential components for the initiation of protein synthesis. Protects formylmethionyl-tRNA from spontaneous hydrolysis and promotes its binding to the 30S ribosomal subunits. Also involved in the hydrolysis of GTP during the formation of the 70S ribosomal complex. This chain is Translation initiation factor IF-2, found in Yersinia enterocolitica serotype O:8 / biotype 1B (strain NCTC 13174 / 8081).